Reading from the N-terminus, the 1250-residue chain is Protein SSD1 (1250 aa).

Residues 1–22 (MSKNSNVNNNRSQEPNNMFVQT) are compositionally biased toward polar residues. Residues 1–32 (MSKNSNVNNNRSQEPNNMFVQTTGGGKNAPKQ) are disordered. Ser2 bears the N-acetylserine mark. Phosphoserine is present on Ser40. Positions 79–163 (TGQYLSGNSG…SSIYGHSRRH (85 aa)) are disordered. Positions 84–94 (SGNSGSNNHFT) are enriched in polar residues. The span at 124–145 (NNSGYYHNSYDNNNNSNNPGSN) shows a compositional bias: low complexity. Phosphoserine is present on residues Ser164 and Ser183. The span at 197–208 (QADSGSNSTTEQ) shows a compositional bias: polar residues. 3 disordered regions span residues 197-338 (QADS…GGRK), 418-443 (KEKE…SSDD), and 455-517 (SNNF…DDVE). Phosphothreonine is present on Thr227. Residues 264–276 (NEYSPGINSNWRN) show a composition bias toward polar residues. Low complexity predominate over residues 277–287 (QSQQPQQQLSP). A phosphoserine mark is found at Ser286 and Ser322. Positions 319-329 (SNSSVHSFSSQ) are enriched in polar residues. Residues 481–495 (STINNDSDSLSSPTK) are compositionally biased toward polar residues. Phosphoserine occurs at positions 491 and 492. Basic residues predominate over residues 497-510 (GVRRRSSLKQRPTQ). The CSD2 domain maps to 582–657 (AWFKPTDKKV…EIDSILRDNN (76 aa)). Tyr688 bears the Phosphotyrosine mark. An RNB domain is found at 694–1015 (DTNEYNIFAI…VHRQLKAVIH (322 aa)). The 85-residue stretch at 1064–1148 (GQLLTMATVL…SIKNKFRSTA (85 aa)) folds into the DIS3L2 C-terminal domain.

Belongs to the RNR ribonuclease family.

Functionally, can suppress the lethality due to deletion of SIT4, and partially the defects due to BCY1 disruption. Is implicated in the control of the cell cycle G1 phase. In Saccharomyces cerevisiae (strain ATCC 204508 / S288c) (Baker's yeast), this protein is Protein SSD1 (SSD1).